Consider the following 362-residue polypeptide: Chorismate synthase (362 aa).

Arginine 48 and arginine 54 together coordinate NADP(+). Residues arginine 131–serine 133, asparagine 243–alanine 244, glycine 287, lysine 302–serine 306, and arginine 328 each bind FMN.

This sequence belongs to the chorismate synthase family. Homotetramer. The cofactor is FMNH2.

The catalysed reaction is 5-O-(1-carboxyvinyl)-3-phosphoshikimate = chorismate + phosphate. It functions in the pathway metabolic intermediate biosynthesis; chorismate biosynthesis; chorismate from D-erythrose 4-phosphate and phosphoenolpyruvate: step 7/7. Functionally, catalyzes the anti-1,4-elimination of the C-3 phosphate and the C-6 proR hydrogen from 5-enolpyruvylshikimate-3-phosphate (EPSP) to yield chorismate, which is the branch point compound that serves as the starting substrate for the three terminal pathways of aromatic amino acid biosynthesis. This reaction introduces a second double bond into the aromatic ring system. In Rhodopseudomonas palustris (strain BisB18), this protein is Chorismate synthase.